A 157-amino-acid chain; its full sequence is Pyruvoyl-dependent arginine decarboxylase 1 (157 aa).

At serine 41 the chain carries Pyruvic acid (Ser).

Belongs to the PdaD family. Requires pyruvate as cofactor.

It catalyses the reaction L-arginine + H(+) = agmatine + CO2. This is Pyruvoyl-dependent arginine decarboxylase 1 (pdaD1) from Archaeoglobus fulgidus (strain ATCC 49558 / DSM 4304 / JCM 9628 / NBRC 100126 / VC-16).